We begin with the raw amino-acid sequence, 198 residues long: NAD(P)H dehydrogenase (quinone) (198 aa).

Residues 4–189 (VLVLYYSMYG…SIARYQGEYV (186 aa)) form the Flavodoxin-like domain. Residues 10-15 (SMYGHI) and 78-80 (TRF) contribute to the FMN site. Residue tyrosine 12 coordinates NAD(+). Residue tryptophan 98 coordinates substrate. Residues 113–118 (STGTGG) and histidine 133 contribute to the FMN site.

The protein belongs to the WrbA family. FMN is required as a cofactor.

It catalyses the reaction a quinone + NADH + H(+) = a quinol + NAD(+). The enzyme catalyses a quinone + NADPH + H(+) = a quinol + NADP(+). The protein is NAD(P)H dehydrogenase (quinone) of Escherichia coli (strain SE11).